We begin with the raw amino-acid sequence, 254 residues long: Proteasome activator complex subunit 3 (254 aa).

Residue Ala-2 is modified to N-acetylalanine. Ser-17 and Ser-24 each carry phosphoserine. Lys-195 carries the N6-acetyllysine; by P300/CBP modification. At Ser-247 the chain carries Phosphoserine; by CHEK2.

Belongs to the PA28 family. Homoheptamer; the stability of the heptamer is essential for the specific activation of the trypsine-like subunit and inhibition of the chymotrypsin-like and postglutamyl-preferring (PGPH) subunits of the proteasome. Interacts with p53/TP53, MDM2 and MAP3K3. Associates with the proteasome. Interacts with CCAR2. Interacts with PSME3IP1 (via C-terminus); the interaction is direct and promotes the association of PSME3 with the 20S proteasome. Interacts with COIL; the interaction is inhibited by PSME3IP1. Post-translationally, phosphorylated by MAP3K3. Phosphorylation at Ser-247 promotes its association with CCAR2. Acetylation at the major site Lys-195 is important for oligomerization and ability to degrade its target substrates. Deacetylated by SIRT1.

The protein localises to the nucleus. It localises to the cytoplasm. Subunit of the 11S REG-gamma (also called PA28-gamma) proteasome regulator, a doughnut-shaped homoheptamer which associates with the proteasome. 11S REG-gamma activates the trypsin-like catalytic subunit of the proteasome but inhibits the chymotrypsin-like and postglutamyl-preferring (PGPH) subunits. Facilitates the MDM2-p53/TP53 interaction which promotes ubiquitination- and MDM2-dependent proteasomal degradation of p53/TP53, limiting its accumulation and resulting in inhibited apoptosis after DNA damage. May also be involved in cell cycle regulation. Mediates CCAR2 and CHEK2-dependent SIRT1 inhibition. In Pongo abelii (Sumatran orangutan), this protein is Proteasome activator complex subunit 3 (PSME3).